Consider the following 541-residue polypeptide: Catalase (541 aa).

Positions 1 to 20 (MPQTKGKPHEEQLEQYKNSQ) are disordered. Active-site residues include H74 and N147. Residue Y357 coordinates heme.

Belongs to the catalase family. Heme serves as cofactor.

It localises to the peroxisome matrix. It carries out the reaction 2 H2O2 = O2 + 2 H2O. In terms of biological role, catalyzes the degradation of hydrogen peroxide (H(2)O(2)) generated by peroxisomal oxidases to water and oxygen, thereby protecting cells from the toxic effects of hydrogen peroxide. The polypeptide is Catalase (CAT) (Ascaris suum (Pig roundworm)).